Consider the following 512-residue polypeptide: Probable cytosol aminopeptidase (512 aa).

Mn(2+) contacts are provided by Lys-284 and Asp-289. The active site involves Lys-296. Residues Asp-307, Asp-366, and Glu-368 each coordinate Mn(2+). Arg-370 is an active-site residue.

This sequence belongs to the peptidase M17 family. Mn(2+) is required as a cofactor.

The protein localises to the cytoplasm. It catalyses the reaction Release of an N-terminal amino acid, Xaa-|-Yaa-, in which Xaa is preferably Leu, but may be other amino acids including Pro although not Arg or Lys, and Yaa may be Pro. Amino acid amides and methyl esters are also readily hydrolyzed, but rates on arylamides are exceedingly low.. It carries out the reaction Release of an N-terminal amino acid, preferentially leucine, but not glutamic or aspartic acids.. Functionally, presumably involved in the processing and regular turnover of intracellular proteins. Catalyzes the removal of unsubstituted N-terminal amino acids from various peptides. The sequence is that of Probable cytosol aminopeptidase from Cupriavidus necator (strain ATCC 17699 / DSM 428 / KCTC 22496 / NCIMB 10442 / H16 / Stanier 337) (Ralstonia eutropha).